A 128-amino-acid polypeptide reads, in one-letter code: Large ribosomal subunit protein bL19 (128 aa).

The protein belongs to the bacterial ribosomal protein bL19 family.

In terms of biological role, this protein is located at the 30S-50S ribosomal subunit interface and may play a role in the structure and function of the aminoacyl-tRNA binding site. The polypeptide is Large ribosomal subunit protein bL19 (Janthinobacterium sp. (strain Marseille) (Minibacterium massiliensis)).